The primary structure comprises 269 residues: Surfeit locus protein 4 (269 aa).

Helical transmembrane passes span 64-84 (LLASSFVFLNLLGQLTGCVLV), 92-112 (YACFGLFGIIALQTIAYSILW), 179-199 (FFSIVQNIVGTALMILVAIGF), 203-223 (LAALTLVVWLFAINVYFNAFW), and 239-259 (FFQTMSVIGGLLLVVALGPGG). A Di-lysine motif motif is present at residues 266–269 (KKEW).

The protein belongs to the SURF4 family. As to quaternary structure, found in a complex composed at least of SURF4, TMED2 and TMED10. May interact with LMAN1. Interacts with ZFYVE27 and with KIF5A in a ZFYVE27-dependent manner. Interacts with STING1. Interacts with SAR1B. Interacts with TMEM41B.

The protein localises to the endoplasmic reticulum membrane. It is found in the endoplasmic reticulum-Golgi intermediate compartment membrane. The protein resides in the golgi apparatus membrane. Endoplasmic reticulum cargo receptor that mediates the export of lipoproteins by recruiting cargos into COPII vesicles to facilitate their secretion. Acts as a cargo receptor for lipoproteins bearing both APOB and APOA1, thereby regulating lipoprotein delivery and the maintenance of lipid homeostasis. Synergizes with the GTPase SAR1B to mediate transport of circulating lipoproteins. Promotes the secretion of PCSK9. Also mediates the efficient secretion of erythropoietin (EPO). May also play a role in the maintenance of the architecture of the endoplasmic reticulum-Golgi intermediate compartment and of the Golgi. The protein is Surfeit locus protein 4 of Homo sapiens (Human).